The sequence spans 248 residues: Leucyl/phenylalanyl-tRNA--protein transferase (248 aa).

This sequence belongs to the L/F-transferase family.

The protein localises to the cytoplasm. It catalyses the reaction N-terminal L-lysyl-[protein] + L-leucyl-tRNA(Leu) = N-terminal L-leucyl-L-lysyl-[protein] + tRNA(Leu) + H(+). The catalysed reaction is N-terminal L-arginyl-[protein] + L-leucyl-tRNA(Leu) = N-terminal L-leucyl-L-arginyl-[protein] + tRNA(Leu) + H(+). It carries out the reaction L-phenylalanyl-tRNA(Phe) + an N-terminal L-alpha-aminoacyl-[protein] = an N-terminal L-phenylalanyl-L-alpha-aminoacyl-[protein] + tRNA(Phe). Its function is as follows. Functions in the N-end rule pathway of protein degradation where it conjugates Leu, Phe and, less efficiently, Met from aminoacyl-tRNAs to the N-termini of proteins containing an N-terminal arginine or lysine. This is Leucyl/phenylalanyl-tRNA--protein transferase from Rhizorhabdus wittichii (strain DSM 6014 / CCUG 31198 / JCM 15750 / NBRC 105917 / EY 4224 / RW1) (Sphingomonas wittichii).